We begin with the raw amino-acid sequence, 332 residues long: Glycerol-3-phosphate dehydrogenase [NAD(P)+] (332 aa).

NADPH contacts are provided by Ser15, Trp16, and Lys110. 3 residues coordinate sn-glycerol 3-phosphate: Lys110, Gly137, and Ser139. An NADPH-binding site is contributed by Ala141. Sn-glycerol 3-phosphate-binding residues include Lys192, Asp245, Ser255, Arg256, and Asn257. Lys192 serves as the catalytic Proton acceptor. NADPH is bound at residue Arg256. Position 282 (Glu282) interacts with NADPH.

The protein belongs to the NAD-dependent glycerol-3-phosphate dehydrogenase family.

The protein localises to the cytoplasm. The catalysed reaction is sn-glycerol 3-phosphate + NAD(+) = dihydroxyacetone phosphate + NADH + H(+). It carries out the reaction sn-glycerol 3-phosphate + NADP(+) = dihydroxyacetone phosphate + NADPH + H(+). It functions in the pathway membrane lipid metabolism; glycerophospholipid metabolism. Its function is as follows. Catalyzes the reduction of the glycolytic intermediate dihydroxyacetone phosphate (DHAP) to sn-glycerol 3-phosphate (G3P), the key precursor for phospholipid synthesis. This Coxiella burnetii (strain RSA 331 / Henzerling II) protein is Glycerol-3-phosphate dehydrogenase [NAD(P)+].